A 215-amino-acid chain; its full sequence is UPF0056 membrane protein YhcE (215 aa).

6 helical membrane passes run 14–34 (FFIGLFALVNPVGIIPVFISM), 54–74 (VAIILWISLFLGDTILQLFGI), 81–101 (IAGGILVVTIAMSMISGKLGE), 120–140 (VVPLALPLMAGPGAISSTIVW), 147–167 (ISYLFGFFVAIALFALCCWGL), and 189–209 (IMGLLLMALGIEFIVTGIKGI).

The protein belongs to the UPF0056 (MarC) family.

The protein resides in the cell membrane. This Escherichia coli (strain K12) protein is UPF0056 membrane protein YhcE (ychE).